The sequence spans 426 residues: Glutamate-1-semialdehyde 2,1-aminomutase (426 aa).

Lys265 is modified (N6-(pyridoxal phosphate)lysine).

The protein belongs to the class-III pyridoxal-phosphate-dependent aminotransferase family. HemL subfamily. In terms of assembly, homodimer. Requires pyridoxal 5'-phosphate as cofactor.

It localises to the cytoplasm. It catalyses the reaction (S)-4-amino-5-oxopentanoate = 5-aminolevulinate. The protein operates within porphyrin-containing compound metabolism; protoporphyrin-IX biosynthesis; 5-aminolevulinate from L-glutamyl-tRNA(Glu): step 2/2. The sequence is that of Glutamate-1-semialdehyde 2,1-aminomutase from Neisseria gonorrhoeae (strain NCCP11945).